The chain runs to 364 residues: Mitoferrin-2 (364 aa).

The segment covering 1-17 (MELEGRGAGGVAGGPAA) has biased composition (gly residues). Disordered stretches follow at residues 1-28 (MELEGRGAGGVAGGPAAGPGRSPGESAL) and 40-60 (GAGGGEAGACRPPVRQDPDSG). Over residues 18-27 (GPGRSPGESA) the composition is skewed to low complexity. Solcar repeat units lie at residues 70 to 158 (ATVT…LKKT), 168 to 252 (NSHI…LQEH), and 259 to 352 (YNPS…FKYL). A run of 6 helical transmembrane segments spans residues 72-91 (VTTHMVAGAVAGILEHCVMY), 133-152 (GLNVTATGAGPAHALYFACY), 170-189 (HIANGAAGCVATLLHDAAMN), 227-246 (SYTTQLTMNVPFQAIHFMTY), 261-280 (PSSHVLSGACAGAVAAAATT), and 327-346 (GVQARVIYQIPSTAIAWSVY).

The protein belongs to the mitochondrial carrier (TC 2.A.29) family. As to expression, ubiquitous. Expressed in placenta, lung, kidney, pancreas, liver, brain, skeletal muscle and heart.

It is found in the mitochondrion inner membrane. It catalyses the reaction Fe(2+)(in) = Fe(2+)(out). Its function is as follows. Mitochondrial iron transporter that mediates iron uptake. Probably required for heme synthesis of hemoproteins and Fe-S cluster assembly in non-erythroid cells. This Homo sapiens (Human) protein is Mitoferrin-2 (SLC25A28).